Reading from the N-terminus, the 650-residue chain is ATP-dependent zinc metalloprotease FtsH (650 aa).

At 1–10 (MKTKKSKSTL) the chain is on the cytoplasmic side. A helical transmembrane segment spans residues 11-31 (WFWLIILLAIIVTIIIIAVTV). Topologically, residues 32–123 (KGTTQVISDA…LVYQGSVGMA (92 aa)) are extracellular. Residues 124 to 144 (LLVSLAPLLIYVLLFGGIIWF) traverse the membrane as a helical segment. The Cytoplasmic segment spans residues 145-650 (MMKSSSGAGA…DIKVEDLDID (506 aa)). 217–224 (GPPGTGKT) provides a ligand contact to ATP. A Zn(2+)-binding site is contributed by histidine 437. Glutamate 438 is a catalytic residue. The Zn(2+) site is built by histidine 441 and aspartate 515.

In the central section; belongs to the AAA ATPase family. The protein in the C-terminal section; belongs to the peptidase M41 family. As to quaternary structure, homohexamer. It depends on Zn(2+) as a cofactor.

It is found in the cell membrane. Its function is as follows. Acts as a processive, ATP-dependent zinc metallopeptidase for both cytoplasmic and membrane proteins. Plays a role in the quality control of integral membrane proteins. This is ATP-dependent zinc metalloprotease FtsH from Mesoplasma florum (strain ATCC 33453 / NBRC 100688 / NCTC 11704 / L1) (Acholeplasma florum).